The sequence spans 149 residues: SsrA-binding protein (149 aa).

It belongs to the SmpB family.

It localises to the cytoplasm. In terms of biological role, required for rescue of stalled ribosomes mediated by trans-translation. Binds to transfer-messenger RNA (tmRNA), required for stable association of tmRNA with ribosomes. tmRNA and SmpB together mimic tRNA shape, replacing the anticodon stem-loop with SmpB. tmRNA is encoded by the ssrA gene; the 2 termini fold to resemble tRNA(Ala) and it encodes a 'tag peptide', a short internal open reading frame. During trans-translation Ala-aminoacylated tmRNA acts like a tRNA, entering the A-site of stalled ribosomes, displacing the stalled mRNA. The ribosome then switches to translate the ORF on the tmRNA; the nascent peptide is terminated with the 'tag peptide' encoded by the tmRNA and targeted for degradation. The ribosome is freed to recommence translation, which seems to be the essential function of trans-translation. The protein is SsrA-binding protein of Carboxydothermus hydrogenoformans (strain ATCC BAA-161 / DSM 6008 / Z-2901).